A 158-amino-acid polypeptide reads, in one-letter code: MRAATPLQTVDRPKDWYKTMFKQIHMVHKPDDDTDMYNTPYTYNAGLYNSPYSAQSHPAAKTQTYRPLSKSHSDNGTDAFKDASSPVPPPHVPPPVPPLRPRDRSSTEKHDWDPPDRKVDTRKFRSEPRSIFEYEPGKSSILQHERPVTKPQAGRRKV.

Positions 1–46 (MRAATPLQTVDRPKDWYKTMFKQIHMVHKPDDDTDMYNTPYTYNAG) constitute a SoHo domain. A disordered region spans residues 28-158 (HKPDDDTDMY…TKPQAGRRKV (131 aa)). Polar residues predominate over residues 50–66 (SPYSAQSHPAAKTQTYR). Over residues 71 to 81 (SHSDNGTDAFK) the composition is skewed to basic and acidic residues. The residue at position 73 (S73) is a Phosphoserine. Positions 86 to 99 (PVPPPHVPPPVPPL) are enriched in pro residues. The span at 100 to 136 (RPRDRSSTEKHDWDPPDRKVDTRKFRSEPRSIFEYEP) shows a compositional bias: basic and acidic residues. Residue A153 is modified to Alanine amide.

Interacts with ABL1/c-Abl, ABL2/v-Abl/Arg, ACTN, AKT1, CBL, PALLD and PAK1. Interacts with ABL, CBL, DNM1, DNM2, FLOT1, AFDN, PTK2B/PYK2, SAPAP, SPTAN1, SYNJ1, SYNJ2, VCL/vinculin, and WASF. Interacts with PTPN12 and WASF1 via its SH3 domains; this interaction may mediate the partial PTPN12 and WASF1 translocation to focal adhesion sites. Ubiquitinated by CBL. Post-translationally, dephosphorylated by PTPN12. Expressed in duodenum.

Its subcellular location is the cytoplasm. It localises to the perinuclear region. The protein resides in the apical cell membrane. The protein localises to the cell junction. It is found in the focal adhesion. Its subcellular location is the cell projection. It localises to the lamellipodium. Its function is as follows. Adapter protein that plays a role in the assembling of signaling complexes, being a link between ABL kinases and actin cytoskeleton. Can form complex with ABL1 and CBL, thus promoting ubiquitination and degradation of ABL1 or with AKT1 and PAK1, thus mediating AKT1-mediated activation of PAK1. May play a role in the regulation of pancreatic cell adhesion, possibly by acting on WASF1 phosphorylation, enhancing phosphorylation by ABL1, as well as dephosphorylation by PTPN12. Increases water and sodium absorption in the intestine and gall-bladder. The protein is Sorbin and SH3 domain-containing protein 2 (SORBS2) of Sus scrofa (Pig).